A 221-amino-acid polypeptide reads, in one-letter code: GTP-binding nuclear protein Ran2 (221 aa).

The 165-residue stretch at 10 to 174 (DYPSFKLVIV…LYLARKLAGD (165 aa)) folds into the Small GTPase Ran-type domain. 21 to 28 (DGGTGKTT) provides a ligand contact to GTP. The interval 40-48 (KKYEPTIGV) is switch-I. Residues Gly-71, 125–128 (NKVD), and 153–155 (SAK) each bind GTP. A switch-II region spans residues 71–87 (GQEKFGGLRDGYYIHGQ).

Belongs to the small GTPase superfamily. Ran family. In terms of assembly, found in a nuclear export complex with RanGTP, exportin and pre-miRNA.

It is found in the nucleus. GTP-binding protein involved in nucleocytoplasmic transport. Required for the import of protein into the nucleus and also for RNA export. Involved in chromatin condensation and control of cell cycle. The polypeptide is GTP-binding nuclear protein Ran2 (RAN2) (Solanum lycopersicum (Tomato)).